The primary structure comprises 208 residues: Ribonuclease HII (208 aa).

One can recognise an RNase H type-2 domain in the interval 11-203; it reads GPVAGVDEAG…VAAAHEQWLK (193 aa). A divalent metal cation is bound by residues Asp17, Glu18, and Asp112.

The protein belongs to the RNase HII family. Mn(2+) serves as cofactor. It depends on Mg(2+) as a cofactor.

Its subcellular location is the cytoplasm. The enzyme catalyses Endonucleolytic cleavage to 5'-phosphomonoester.. Its function is as follows. Endonuclease that specifically degrades the RNA of RNA-DNA hybrids. The chain is Ribonuclease HII from Corynebacterium jeikeium (strain K411).